Reading from the N-terminus, the 396-residue chain is MRDVFIVAAKRTPLGRFGGSLTNFSAADLGAHVMKSVLAQAGVGGDQLDLYIMGNVLRAGHGQLIPRQAALKAEIPDTVDGYAVDMVCSSAMMSVINAALTIRAGEGDLILAGGTESMSQTGFYLSHRARWGYKFLMGAPENLTDLLLHDGLTDSTNGEGMGEQTEKLAAEHGFSRIELDEVACLSQQRAAHATESGYFDSEIAPIEITSRKGTQVLASDEGIRSDTTVESLGKLRSAFAKDGVLTAGNCSQITDGAAALLLASGEAVEKYQLKPLAKILGGSWAAGTPSRFPELPITASQKLLAKLDKTLADFDLFENNEAFSVSNLLFERRLGVDRDKLNVNGGAIALGHPIGASGARIMVTLLYALQQRDKTLGLAALCHGTGGGTAIALERV.

Cys88 (acyl-thioester intermediate) is an active-site residue. Active-site proton acceptor residues include His352 and Cys382.

It belongs to the thiolase-like superfamily. Thiolase family. Homotetramer.

The catalysed reaction is 2 acetyl-CoA = acetoacetyl-CoA + CoA. The protein operates within biopolymer metabolism; poly-(R)-3-hydroxybutanoate biosynthesis. Its function is as follows. When expressed in E.coli with Synechocystis PhaB, PhaC and PhaE confers the ability to synthesize up to 12% (w/w) poly(3-hydroxybutyrate) (PHB) depending on the carbon source. The chain is Acetyl-CoA acetyltransferase from Synechocystis sp. (strain ATCC 27184 / PCC 6803 / Kazusa).